A 467-amino-acid chain; its full sequence is Argininosuccinate lyase (467 aa).

The protein belongs to the lyase 1 family. Argininosuccinate lyase subfamily.

It is found in the cytoplasm. The enzyme catalyses 2-(N(omega)-L-arginino)succinate = fumarate + L-arginine. It participates in amino-acid biosynthesis; L-arginine biosynthesis; L-arginine from L-ornithine and carbamoyl phosphate: step 3/3. The polypeptide is Argininosuccinate lyase (Methylibium petroleiphilum (strain ATCC BAA-1232 / LMG 22953 / PM1)).